The chain runs to 217 residues: Small ribosomal subunit protein uS3 (217 aa).

The KH type-2 domain occupies 24–93 (IKEFLEYKLS…NPQIDVIDVS (70 aa)).

The protein belongs to the universal ribosomal protein uS3 family. In terms of assembly, part of the 30S ribosomal subunit.

Binds the lower part of the 30S subunit head. The protein is Small ribosomal subunit protein uS3 of Pyrobaculum islandicum (strain DSM 4184 / JCM 9189 / GEO3).